We begin with the raw amino-acid sequence, 240 residues long: Poxin (240 aa).

His-46 functions as the Proton donor in the catalytic mechanism. Tyr-181 functions as the Shared with catalytic histidine of dimeric partner in the catalytic mechanism. The active-site Proton acceptor; shared with catalytic histidine of dimeric partner is Lys-185.

Belongs to the poxin family. In terms of assembly, homodimer.

It catalyses the reaction 2',3'-cGAMP + H2O = Gp(2'-5')Ap(3') + H(+). Its function is as follows. Nuclease that cleaves host 2',3'-cGAMP. This Bombyx mori (Silk moth) protein is Poxin (p26).